Consider the following 840-residue polypeptide: Sorting nexin-25 (840 aa).

The 164-residue stretch at 1–164 (MDKALKEVFD…MLLAQLAYRE (164 aa)) folds into the PXA domain. The 115-residue stretch at 287–401 (QFEDILANTF…IVSDLYEKLL (115 aa)) folds into the RGS domain. Positions 434-499 (TNQINEQASF…RTDLQLHMAR (66 aa)) form a coiled coil. The 121-residue stretch at 508–628 (GMWKASITSG…AFLSPSPDYL (121 aa)) folds into the PX domain. Residue Ser-665 is modified to Phosphoserine.

It belongs to the sorting nexin family.

It is found in the endosome membrane. In terms of biological role, may be involved in several stages of intracellular trafficking. The polypeptide is Sorting nexin-25 (SNX25) (Homo sapiens (Human)).